A 761-amino-acid polypeptide reads, in one-letter code: 5-methyltetrahydropteroyltriglutamate--homocysteine methyltransferase (761 aa).

Residues 16–19 (RELK) and Lys-116 each bind 5-methyltetrahydropteroyltri-L-glutamate. Residues 437–439 (IGS) and Glu-490 each bind L-homocysteine. L-methionine is bound by residues 437–439 (IGS) and Glu-490. Residues 521-522 (RC) and Trp-567 contribute to the 5-methyltetrahydropteroyltri-L-glutamate site. Asp-605 lines the L-homocysteine pocket. Asp-605 is a binding site for L-methionine. A 5-methyltetrahydropteroyltri-L-glutamate-binding site is contributed by Glu-611. Zn(2+) is bound by residues His-647, Cys-649, and Glu-671. Catalysis depends on His-700, which acts as the Proton donor. Cys-732 contacts Zn(2+).

Belongs to the vitamin-B12 independent methionine synthase family. It depends on Zn(2+) as a cofactor.

The catalysed reaction is 5-methyltetrahydropteroyltri-L-glutamate + L-homocysteine = tetrahydropteroyltri-L-glutamate + L-methionine. It functions in the pathway amino-acid biosynthesis; L-methionine biosynthesis via de novo pathway; L-methionine from L-homocysteine (MetE route): step 1/1. Its function is as follows. Catalyzes the transfer of a methyl group from 5-methyltetrahydrofolate to homocysteine resulting in methionine formation. The protein is 5-methyltetrahydropteroyltriglutamate--homocysteine methyltransferase of Chromohalobacter salexigens (strain ATCC BAA-138 / DSM 3043 / CIP 106854 / NCIMB 13768 / 1H11).